Reading from the N-terminus, the 135-residue chain is MSEFKRLMRLKLKMKQKRPEFKRQDSHRFQRIGTMWRRPTGHHSGQRIQVTYRLSPVKIGFRGPALVRGLHPSGLEDIIVNNVKQLAALNPKTQGARIASAVGTRKRIEIVKKANELGIRVFNVSKQKQGEFLSL.

It belongs to the eukaryotic ribosomal protein eL32 family.

The protein is Large ribosomal subunit protein eL32 (rpl32e) of Methanococcus vannielii.